The chain runs to 111 residues: Prothymosin alpha (111 aa).

Met1 carries the N-acetylmethionine modification. Residues 1–111 are disordered; the sequence is MSDAAVDTSS…TKKQKTEEDD (111 aa). Position 2 is an N-acetylserine; in Prothymosin alpha, N-terminally processed (Ser2). Ser2 carries the phosphoserine modification. Thr8 is modified (phosphothreonine). A phosphoserine mark is found at Ser9 and Ser10. A phosphothreonine mark is found at Thr13 and Thr14. Basic and acidic residues predominate over residues 13-31; that stretch reads TTKDLKEKKEVVEEAENGR. Lys15 is modified (N6-acetyllysine; alternate). Lys15 is subject to N6-succinyllysine; alternate. Residues 43 to 84 are compositionally biased toward acidic residues; that stretch reads ENGEQEADNEVDEEEEEGGEEEEEEEEGDGEEEDGDEDEEAE. The span at 101-111 shows a compositional bias: basic and acidic residues; that stretch reads DTKKQKTEEDD. Thr102 carries the phosphothreonine modification. At Lys103 the chain carries N6-acetyllysine; alternate. A Glycyl lysine isopeptide (Lys-Gly) (interchain with G-Cter in SUMO2); alternate cross-link involves residue Lys103. At Thr107 the chain carries Phosphothreonine.

Belongs to the pro/parathymosin family. As to quaternary structure, interacts with NUPR1; regulates apoptotic process. Covalently linked to a small RNA of about 20 nucleotides.

Its subcellular location is the nucleus. Its function is as follows. Prothymosin alpha may mediate immune function by conferring resistance to certain opportunistic infections. This is Prothymosin alpha (Ptma) from Mus musculus (Mouse).